We begin with the raw amino-acid sequence, 326 residues long: Putative UPF0725 protein At1g28500 (326 aa).

A compositionally biased stretch (basic and acidic residues) spans 301-320; the sequence is KDTEQRSKTRQSEEKVESSQ. A disordered region spans residues 301–326; it reads KDTEQRSKTRQSEEKVESSQKRSRLC.

The protein belongs to the UPF0725 (EMB2204) family.

The sequence is that of Putative UPF0725 protein At1g28500 from Arabidopsis thaliana (Mouse-ear cress).